Here is a 465-residue protein sequence, read N- to C-terminus: MTIHIYNTLTRQKEEFIPLEENKVKMYVCGPTVYNYIHIGNARPPMVFDTVRRYLEYKGYDVQYVSNFTDVDDKLIKAANELGEDVPTIADRFVEAYFEDVTALGCKHATVHPRVTENMDIIIEFIQELVNKGYAYESEGDVYFRTKEFEGYGKLSHQPIADLRHGARIEVGEKKQDPLDFALWKAAKEGEIFWESPWGQGRPGWHIECSAMARKYLGDTIDIHAGGQDLAFPHHENEIAQSEALTGKTFARYWMHNGYININNEKMSKSLGNFILVHDIIKQYDPQLIRFFMLSVHYRHPINFSEELLQSTNNGLERIKTAYGNLKHRMESSTDLTDHNEKWLADLEKFQTAFEEAMNDDFNTANAITELYNVANHANQYLLEEHTSTVVIEAYVKQLETLFDILGLELAQEELLDEEIEALIQKRIEARKNRDFALSDQIRDDLKDRNIILEDTAQGTRWKRG.

Zn(2+) is bound at residue Cys-29. The 'HIGH' region signature appears at 31–41 (PTVYNYIHIGN). Zn(2+) contacts are provided by Cys-209, His-234, and Glu-238. The 'KMSKS' region signature appears at 266–270 (KMSKS). Lys-269 contributes to the ATP binding site. Ser-270 is subject to Phosphoserine.

Belongs to the class-I aminoacyl-tRNA synthetase family. Monomer. Zn(2+) is required as a cofactor.

It is found in the cytoplasm. The enzyme catalyses tRNA(Cys) + L-cysteine + ATP = L-cysteinyl-tRNA(Cys) + AMP + diphosphate. The polypeptide is Cysteine--tRNA ligase (Bacillus cereus (strain 03BB102)).